The sequence spans 350 residues: uncharacterized protein (350 aa).

The segment covering 197–212 has biased composition (basic and acidic residues); that stretch reads KNDNSEDNRSEDDLKS. Residues 197–217 form a disordered region; that stretch reads KNDNSEDNRSEDDLKSSQDPV.

It localises to the plastid. Its subcellular location is the chloroplast. This is an uncharacterized protein from Euglena gracilis.